Here is a 294-residue protein sequence, read N- to C-terminus: Release factor glutamine methyltransferase (294 aa).

Residues 131–135 (GTGSG), Asp154, and Asn202 each bind S-adenosyl-L-methionine. Substrate is bound at residue 202-205 (NPPY).

This sequence belongs to the protein N5-glutamine methyltransferase family. PrmC subfamily.

The catalysed reaction is L-glutaminyl-[peptide chain release factor] + S-adenosyl-L-methionine = N(5)-methyl-L-glutaminyl-[peptide chain release factor] + S-adenosyl-L-homocysteine + H(+). Its function is as follows. Methylates the class 1 translation termination release factors RF1/PrfA and RF2/PrfB on the glutamine residue of the universally conserved GGQ motif. The polypeptide is Release factor glutamine methyltransferase (Chlorobaculum tepidum (strain ATCC 49652 / DSM 12025 / NBRC 103806 / TLS) (Chlorobium tepidum)).